Consider the following 105-residue polypeptide: MKVHKGDTVLVISGKDKGAKGKVLVAYPDRNKVLVEGVNRIKKHTAVSANERGASSGGIVTQEAPIHVSNVMVVDSDGKPTRVGYRIDDETGKKVRIAKTNGKDI.

This sequence belongs to the universal ribosomal protein uL24 family. Part of the 50S ribosomal subunit.

Its function is as follows. One of two assembly initiator proteins, it binds directly to the 5'-end of the 23S rRNA, where it nucleates assembly of the 50S subunit. In terms of biological role, one of the proteins that surrounds the polypeptide exit tunnel on the outside of the subunit. This Mycolicibacterium smegmatis (strain ATCC 700084 / mc(2)155) (Mycobacterium smegmatis) protein is Large ribosomal subunit protein uL24.